A 253-amino-acid polypeptide reads, in one-letter code: Zinc finger protein GIS (253 aa).

Acidic residues predominate over residues 1-10 (MDEATGETET). Residues 1 to 85 (MDEATGETET…GDNSTDNNSI (85 aa)) form a disordered region. Composition is skewed to polar residues over residues 11–21 (QDFMNVESFSQ), 49–63 (SITTGQEDYTDPYQT), and 76–85 (GDNSTDNNSI). The C2H2-type zinc-finger motif lies at 91-113 (FECHYCFRNFPTSQALGGHQNAH).

In terms of tissue distribution, expressed in inflorescence meristems, floral meristems and stem epidermis.

It localises to the nucleus. Its function is as follows. Probable transcription factor required for the initiation of inflorescence trichomes in response to gibberellin (GA). Mediates the induction of GL1 expression by GA in inflorescence organs and is antagonized in its action by the DELLA repressor GAI. Acts upstream of the trichome initiation regulators GL1 and GL3, and downstream of the GA signaling repressor SPINDLY (SPY). Does not play a significant role in the cytokinin response. Controls trichome branching through GA signaling. Acts downstream of the key regulator STICHEL (STI) in an endoreduplication-independent pathway. Controls trichome cell division indirectly by acting downstream of a key endoreduplication regulator SIAMESE (SIM). This Arabidopsis thaliana (Mouse-ear cress) protein is Zinc finger protein GIS (GIS).